The following is a 308-amino-acid chain: Staphylococcal superantigen-like 4 (308 aa).

Residues 1–30 form the signal peptide; the sequence is MKITTIAKTSLALGLLTTGVITTTTQAANA. Residues 28 to 117 form a disordered region; sequence ANATTPSSTK…TTKQVPTEIN (90 aa). Composition is skewed to polar residues over residues 33–47 and 55–76; these read PSST…TPPS and SKPN…TANA. Positions 77 to 93 are enriched in low complexity; that stretch reads TTPPSTKVTTPPSTNTP. The segment covering 94-114 has biased composition (polar residues); sequence QPMQSTKSDTPQSPTTKQVPT. Residues 180-278 form a sialyl Lewis X-binding region; the sequence is VDVFVVLEEN…VIKMKNGGKY (99 aa).

Belongs to the staphylococcal/streptococcal toxin family.

Its subcellular location is the secreted. Functionally, secreted protein that plays a role in immune innate response inhibition by interfering with host TLR2-mediated pathway. The protein is Staphylococcal superantigen-like 4 of Staphylococcus aureus (strain Newman).